The chain runs to 214 residues: Pyridoxine/pyridoxamine 5'-phosphate oxidase (214 aa).

Residues 8 to 11 (RKSY) and K67 each bind substrate. Residues 62 to 67 (RVVLLK), 77 to 78 (YT), K84, and Q106 contribute to the FMN site. Y124, R128, and S132 together coordinate substrate. FMN contacts are provided by residues 141–142 (QS) and W186. Residue 192–194 (RLH) participates in substrate binding. R196 contacts FMN.

It belongs to the pyridoxamine 5'-phosphate oxidase family. As to quaternary structure, homodimer. The cofactor is FMN.

The catalysed reaction is pyridoxamine 5'-phosphate + O2 + H2O = pyridoxal 5'-phosphate + H2O2 + NH4(+). It carries out the reaction pyridoxine 5'-phosphate + O2 = pyridoxal 5'-phosphate + H2O2. It functions in the pathway cofactor metabolism; pyridoxal 5'-phosphate salvage; pyridoxal 5'-phosphate from pyridoxamine 5'-phosphate: step 1/1. It participates in cofactor metabolism; pyridoxal 5'-phosphate salvage; pyridoxal 5'-phosphate from pyridoxine 5'-phosphate: step 1/1. In terms of biological role, catalyzes the oxidation of either pyridoxine 5'-phosphate (PNP) or pyridoxamine 5'-phosphate (PMP) into pyridoxal 5'-phosphate (PLP). The chain is Pyridoxine/pyridoxamine 5'-phosphate oxidase from Flavobacterium johnsoniae (strain ATCC 17061 / DSM 2064 / JCM 8514 / BCRC 14874 / CCUG 350202 / NBRC 14942 / NCIMB 11054 / UW101) (Cytophaga johnsonae).